The sequence spans 125 residues: Small ribosomal subunit protein uS13 (125 aa).

Residues 90–125 (QRHRKGLPVRGQRTKTNARTRKGPKRTVAGKKKATK) are disordered.

This sequence belongs to the universal ribosomal protein uS13 family. Part of the 30S ribosomal subunit. Forms a loose heterodimer with protein S19. Forms two bridges to the 50S subunit in the 70S ribosome.

Its function is as follows. Located at the top of the head of the 30S subunit, it contacts several helices of the 16S rRNA. In the 70S ribosome it contacts the 23S rRNA (bridge B1a) and protein L5 of the 50S subunit (bridge B1b), connecting the 2 subunits; these bridges are implicated in subunit movement. Contacts the tRNAs in the A and P-sites. The polypeptide is Small ribosomal subunit protein uS13 (Bifidobacterium longum (strain DJO10A)).